The following is a 166-amino-acid chain: MTKQQMIAMFIAMIITSALVSAATIMGGIWYLNKQAQDSGETSSLLENSPLSFLVTEQPTSKGPSFHPLDKVVLSIKGKKQTHFVMLELAIETRRPERIKDIDNYMPMVQNSLLKLFSDKTFDELQQTGAIDILQNEVKQTLLVAFAKTDIVRDIDDVLLTKYVVQ.

A helical membrane pass occupies residues 6-26; sequence MIAMFIAMIITSALVSAATIM.

It belongs to the FliL family.

It is found in the cell inner membrane. Functionally, controls the rotational direction of flagella during chemotaxis. The protein is Flagellar protein LafL (lafL) of Vibrio parahaemolyticus serotype O3:K6 (strain RIMD 2210633).